Consider the following 314-residue polypeptide: tRNA dimethylallyltransferase 2 (314 aa).

An ATP-binding site is contributed by 8 to 15 (GPTGTGKS). Position 10 to 15 (10 to 15 (TGTGKS)) interacts with substrate.

It belongs to the IPP transferase family. Monomer. Mg(2+) serves as cofactor.

The enzyme catalyses adenosine(37) in tRNA + dimethylallyl diphosphate = N(6)-dimethylallyladenosine(37) in tRNA + diphosphate. Its function is as follows. Catalyzes the transfer of a dimethylallyl group onto the adenine at position 37 in tRNAs that read codons beginning with uridine, leading to the formation of N6-(dimethylallyl)adenosine (i(6)A). The chain is tRNA dimethylallyltransferase 2 from Mycobacterium ulcerans (strain Agy99).